A 201-amino-acid polypeptide reads, in one-letter code: Glutathione S-transferase GstA (201 aa).

One can recognise a GST N-terminal domain in the interval 1–81 (MKLFYKPGAC…YLADSVPDRQ (81 aa)). Residues C10, K35, V52, 65-66 (EG), N99, and 103-106 (TELH) contribute to the glutathione site. The GST C-terminal domain occupies 87 to 201 (NSISRYKTIE…QDALSAEGLK (115 aa)).

The protein belongs to the GST superfamily. Beta family. In terms of assembly, homodimer.

The protein localises to the cytoplasm. The catalysed reaction is RX + glutathione = an S-substituted glutathione + a halide anion + H(+). Conjugation of reduced glutathione to a wide number of exogenous and endogenous hydrophobic electrophiles. This chain is Glutathione S-transferase GstA (gstA), found in Escherichia coli O157:H7.